The primary structure comprises 129 residues: Small ribosomal subunit protein uS11 (129 aa).

It belongs to the universal ribosomal protein uS11 family. As to quaternary structure, part of the 30S ribosomal subunit. Interacts with proteins S7 and S18. Binds to IF-3.

Located on the platform of the 30S subunit, it bridges several disparate RNA helices of the 16S rRNA. Forms part of the Shine-Dalgarno cleft in the 70S ribosome. The chain is Small ribosomal subunit protein uS11 from Baumannia cicadellinicola subsp. Homalodisca coagulata.